Reading from the N-terminus, the 302-residue chain is Sulfate adenylyltransferase subunit 2 (302 aa).

The tract at residues 280–302 (RQGRLIDSDQSASMEQKKRQGYF) is disordered.

Belongs to the PAPS reductase family. CysD subfamily. Heterodimer composed of CysD, the smaller subunit, and CysN.

It catalyses the reaction sulfate + ATP + H(+) = adenosine 5'-phosphosulfate + diphosphate. The protein operates within sulfur metabolism; hydrogen sulfide biosynthesis; sulfite from sulfate: step 1/3. In terms of biological role, with CysN forms the ATP sulfurylase (ATPS) that catalyzes the adenylation of sulfate producing adenosine 5'-phosphosulfate (APS) and diphosphate, the first enzymatic step in sulfur assimilation pathway. APS synthesis involves the formation of a high-energy phosphoric-sulfuric acid anhydride bond driven by GTP hydrolysis by CysN coupled to ATP hydrolysis by CysD. The polypeptide is Sulfate adenylyltransferase subunit 2 (Shewanella sp. (strain ANA-3)).